A 1844-amino-acid chain; its full sequence is Non-structural replication polyprotein (1844 aa).

In terms of domain architecture, Alphavirus-like MT spans 58 to 219 (SGLGTSHHPH…NQPSDAHSWL (162 aa)). The tract at residues 571-729 (TAFLPFTPTT…APPTHPLPSS (159 aa)) is disordered. Over residues 609-621 (SSPGAQPPTTTAA) the composition is skewed to low complexity. The 152-residue stretch at 728 to 879 (SSQLLPAPLT…FSPGKRLLGS (152 aa)) folds into the OTU domain. The Peptidase C21 domain occupies 730–884 (QLLPAPLTND…RLLGSQPSAK (155 aa)). The active-site For protease activity is the cysteine 783. The disordered stretch occupies residues 859-887 (DITHTTGPPSHFSPGKRLLGSQPSAKGHP). Residues 865 to 867 (GPP) carry the GPP flap motif. Histidine 869 (for protease activity) is an active-site residue. One can recognise a (+)RNA virus helicase ATP-binding domain in the interval 946–1103 (TGPTPKERII…RLLPYIDMYC (158 aa)). An a ribonucleoside 5'-triphosphate-binding site is contributed by 976–983 (GFAGCGKT). The 133-residue stretch at 1104–1236 (WWSYRIPQCI…SLIIMDRYFP (133 aa)) folds into the (+)RNA virus helicase C-terminal domain. The RdRp catalytic domain occupies 1572–1678 (TPKIANDYTA…DHPLPTRHDW (107 aa)).

The protein belongs to the Tymoviridae non-structural replication polyprotein family. Interacts with host ubiquitin. In terms of processing, specific enzymatic cleavages by the host yield mature proteins.

The protein localises to the host chloroplast envelope. It catalyses the reaction Thiol-dependent hydrolysis of ester, thioester, amide, peptide and isopeptide bonds formed by the C-terminal Gly of ubiquitin (a 76-residue protein attached to proteins as an intracellular targeting signal).. The enzyme catalyses RNA(n) + a ribonucleoside 5'-triphosphate = RNA(n+1) + diphosphate. Its function is as follows. Acts as a cysteine protease, methyltransferase and deubiquitinase. The cysteine protease activity cleaves the polyprotein giving rise to mature proteins. The protease has the ability to process substrates in trans. The methyltransferase domain is probably involved in viral RNA capping. The deubiquitylating activity counteracts the degradation of the viral polymerase mediated by the host ubiquitin-proteasome system. The polymerase is thus stabilized and infectivity is increased. Favors K63 poly-Ub linkage. RNA-directed RNA polymerase is responsible for the replication and transcription of the genome. This chain is Non-structural replication polyprotein, found in Brassica.